The sequence spans 634 residues: MSDSFYRYDVIVIGGGHAGTEAALAAARAGARTLLLTHNIETVGAMSCNPAIGGIGKGHLVKEIDALGGAMAKAADLAGIQWRTLNASKGPAVRATRCQADRNLYRSAIRRIVEAQPNLTVFQAAVDDLIIHNGAAEGDSVRGVITQTGLRFEATAVVLTAGTFLAGKIHVGETQYAAGRMGDPPATTLAARLRERPFAIDRLKTGTPPRIDGRTLDYTMMDEQPGDDPLPVMSFMGQVSDHPTQVSCWITHTTEQTHDIIRGALHRSPLYSGQIEGIGPRYCPSIEDKVVRFADKTSHQIFVEPEGLDVTEIYPNGISTSLPFDVQLALVRSIRGFAQAHITRPGYAIEYDFFDPRGLKASLETKAVGGLFFAGQINGTTGYEEAAAQGLLAGLNAARQAQALPAWSPRRDEAYLGVLVDDLITHGTTEPYRMFTSRAEYRLQLREDNADLRLTGVGRAMGLVDDARWARFSSKQEAVQRETARLSALWATPGNALGREVVDTLGVPMSRETNVLDLIKRPELSYAALMRVPTLGPGVDDAQVAEQVEIGVKYAGYLNRQRDEIARQQRHETTPIPEGFDYAGVRGLSMEVQQKLERVRPQSIGQAQRIPGMTPAAISLLLVHLERARRSQVA.

FAD is bound at residue 14-19; the sequence is GGGHAG. 279–293 lines the NAD(+) pocket; that stretch reads GPRYCPSIEDKVVRF.

Belongs to the MnmG family. Homodimer. Heterotetramer of two MnmE and two MnmG subunits. Requires FAD as cofactor.

It localises to the cytoplasm. In terms of biological role, NAD-binding protein involved in the addition of a carboxymethylaminomethyl (cmnm) group at the wobble position (U34) of certain tRNAs, forming tRNA-cmnm(5)s(2)U34. The chain is tRNA uridine 5-carboxymethylaminomethyl modification enzyme MnmG from Xanthomonas campestris pv. campestris (strain 8004).